Consider the following 214-residue polypeptide: Transcription factor MYB24 (214 aa).

2 consecutive HTH myb-type domains span residues 14–66 (DAEV…LNYL) and 67–121 (RPDV…QKYI). DNA-binding regions (H-T-H motif) lie at residues 42–66 (WNSL…LNYL) and 94–117 (WSKI…RTKI).

Interacts (via N-terminus) with TIFY10A/JAZ1, TIFY5A/JAZ8 AND TIFY3A/JAZ11. As to expression, expressed specifically in flowers. Expressed in all four whorls of the flower and in the vascular tissue of stamen filament and sepals. Detected in male and female gametophytes, especially in microspores and ovules. Weakly expressed in petals and the upper part of pistils.

The protein resides in the nucleus. Transcription factor acting redundantly with MYB21 and MYB57 to control stamen filament elongation in the late developed flowers. Contributes with MYB21 to induction of MYB108 by jasmonate. Repressed at the transcript levels by DELLA proteins. The polypeptide is Transcription factor MYB24 (MYB24) (Arabidopsis thaliana (Mouse-ear cress)).